Here is a 71-residue protein sequence, read N- to C-terminus: Heat-stable enterotoxin A (71 aa).

The signal sequence occupies residues 1–19 (MKKIVFVLVLMLSSFGAFG). A propeptide spanning residues 20-53 (QETVSGQFSDALSTPITAEVYKQACDPPLPPAEV) is cleaved from the precursor. 3 disulfide bridges follow: Cys-59–Cys-64, Cys-60–Cys-68, and Cys-63–Cys-71.

The protein belongs to the heat-stable enterotoxin family.

Its subcellular location is the secreted. Toxin which activates the particulate form of guanylate cyclase and increases cyclic GMP levels within the host intestinal epithelial cells. In Yersinia enterocolitica, this protein is Heat-stable enterotoxin A (ystA).